The sequence spans 259 residues: ATP synthase subunit a (259 aa).

Positions 1-7 (MTNNYIN) are cleaved as a propeptide — removed in mature form. The next 5 helical transmembrane spans lie at 36–56 (FSLY…LSIG), 95–115 (YVPL…IGMV), 125–145 (LIYI…LGLF), 164–206 (LVPV…NLVK), and 211–253 (INYF…SYLK).

In terms of assembly, F-type ATP synthases have 2 components, the catalytic core F(1) and the membrane-embedded component F(0), linked together by a central stalk and a peripheral stalk. The central stalk, also called rotor shaft, is often seen as part of F(1). The peripheral stalk is seen as part of F(0). F(0) contains the membrane channel next to the rotor. F-type ATP synthases form dimers but each monomer functions independently in ATP generation. The dimer consists of 18 different polypeptides: ATP1 (subunit alpha, part of F(1), 3 molecules per monomer), ATP2 (subunit beta, part of F(1), 3 molecules per monomer), ATP3 (subunit gamma, part of the central stalk), ATP4 (subunit b, part of the peripheral stalk), ATP5/OSCP (subunit 5/OSCP, part of the peripheral stalk), ATP6 (subunit a, part of the peripheral stalk), ATP7 (subunit d, part of the peripheral stalk), ATP8 (subunit 8, part of the peripheral stalk), OLI1 (subunit c, part of the rotor, 10 molecules per monomer), ATP14 (subunit h, part of the peripheral stalk), ATP15 (subunit epsilon, part of the central stalk), ATP16 (subunit delta, part of the central stalk), ATP17 (subunit f, part of the peripheral stalk), ATP18 (subunit i/j, part of the peripheral stalk). Dimer-specific subunits are ATP19 (subunit k, at interface between monomers), ATP20 (subunit g, at interface between monomers), TIM11 (subunit e, at interface between monomers). Also contains subunit L.

The protein localises to the mitochondrion inner membrane. Its function is as follows. Mitochondrial membrane ATP synthase (F(1)F(0) ATP synthase or Complex V) produces ATP from ADP in the presence of a proton gradient across the membrane which is generated by electron transport complexes of the respiratory chain. F-type ATP synthases consist of two structural domains, F(1) - containing the extramembraneous catalytic core, and F(0) - containing the membrane proton channel, linked together by a central stalk and a peripheral stalk. During catalysis, ATP synthesis in the catalytic domain of F(1) is coupled via a rotary mechanism of the central stalk subunits to proton translocation. Key component of the proton channel; it may play a direct role in the translocation of protons across the membrane. The polypeptide is ATP synthase subunit a (Pichia angusta (Yeast)).